We begin with the raw amino-acid sequence, 301 residues long: 1,5-anhydro-D-fructose reductase (301 aa).

D35 lines the NADP(+) pocket. Y40 (proton donor) is an active-site residue. H102 contributes to the substrate binding site. NADP(+) contacts are provided by residues Q175 and 246–258; that span reads IPKS…IREN.

Belongs to the aldo/keto reductase family. Monomer.

The protein resides in the cytoplasm. It catalyses the reaction 1,5-anhydro-D-glucitol + NADP(+) = 1,5-anhydro-D-fructose + NADPH + H(+). With respect to regulation, inhibited by p-chloromercuribenzoic acid and alkyliodines. Its function is as follows. Catalyzes the NADPH-dependent reduction of 1,5-anhydro-D-fructose (AF) to 1,5-anhydro-D-glucitol. The polypeptide is 1,5-anhydro-D-fructose reductase (Akr1e2) (Mus musculus (Mouse)).